The primary structure comprises 342 residues: Ribosomal RNA small subunit methyltransferase C (342 aa).

This sequence belongs to the methyltransferase superfamily. RsmC family. Monomer.

Its subcellular location is the cytoplasm. The enzyme catalyses guanosine(1207) in 16S rRNA + S-adenosyl-L-methionine = N(2)-methylguanosine(1207) in 16S rRNA + S-adenosyl-L-homocysteine + H(+). In terms of biological role, specifically methylates the guanine in position 1207 of 16S rRNA in the 30S particle. This Shewanella sp. (strain MR-4) protein is Ribosomal RNA small subunit methyltransferase C.